Consider the following 207-residue polypeptide: Holliday junction branch migration complex subunit RuvA (207 aa).

Positions 1–63 (MIGMLKGRVE…QDAITLFGFL (63 aa)) are domain I. The tract at residues 64–142 (DARSKRMFLQ…VDKIETGEPT (79 aa)) is domain II. The segment at 143–153 (STQRIPTDKGV) is flexible linker. The segment at 153–207 (VEQVVEGLMSLGWKQADAQQAVDSVISSSGIALPLEEGNVPTVLRLALTSLDRGR) is domain III.

Belongs to the RuvA family. In terms of assembly, homotetramer. Forms an RuvA(8)-RuvB(12)-Holliday junction (HJ) complex. HJ DNA is sandwiched between 2 RuvA tetramers; dsDNA enters through RuvA and exits via RuvB. An RuvB hexamer assembles on each DNA strand where it exits the tetramer. Each RuvB hexamer is contacted by two RuvA subunits (via domain III) on 2 adjacent RuvB subunits; this complex drives branch migration. In the full resolvosome a probable DNA-RuvA(4)-RuvB(12)-RuvC(2) complex forms which resolves the HJ.

The protein localises to the cytoplasm. In terms of biological role, the RuvA-RuvB-RuvC complex processes Holliday junction (HJ) DNA during genetic recombination and DNA repair, while the RuvA-RuvB complex plays an important role in the rescue of blocked DNA replication forks via replication fork reversal (RFR). RuvA specifically binds to HJ cruciform DNA, conferring on it an open structure. The RuvB hexamer acts as an ATP-dependent pump, pulling dsDNA into and through the RuvAB complex. HJ branch migration allows RuvC to scan DNA until it finds its consensus sequence, where it cleaves and resolves the cruciform DNA. The polypeptide is Holliday junction branch migration complex subunit RuvA (Bifidobacterium animalis subsp. lactis (strain AD011)).